Reading from the N-terminus, the 238-residue chain is CASP-like protein 2BC2 (238 aa).

Over 1–66 (MPSSTYPRRR…FHQKVAVEKR (66 aa)) the chain is Cytoplasmic. A helical transmembrane segment spans residues 67-87 (LKIGEVILRFAMIALALVAAV). The Extracellular portion of the chain corresponds to 88 to 111 (RVGTDTQTRTIFTIEKKAKYSDMK). A helical membrane pass occupies residues 112–132 (ALVFLVVMNGIVASYSLLQGL). The Cytoplasmic portion of the chain corresponds to 133 to 148 (RCVLSIYTQSPLTSKP). The helical transmembrane segment at 149 to 169 (LAWLIFALDQTMAYFSLAAAA) threads the bilayer. The Extracellular portion of the chain corresponds to 170–200 (AAAESAYLAERGQTEFQWMKVCIFYEKFCHQ). The chain crosses the membrane as a helical span at residues 201-221 (IGEGLVSTFLVSLSMATVSGM). The Cytoplasmic segment spans residues 222-238 (SAYHLFRLYGSKGKSIQ).

The protein belongs to the Casparian strip membrane proteins (CASP) family. In terms of assembly, homodimer and heterodimers.

The protein localises to the cell membrane. In Picea sitchensis (Sitka spruce), this protein is CASP-like protein 2BC2.